Reading from the N-terminus, the 202-residue chain is Small ribosomal subunit protein uS4 (202 aa).

Residues 91-154 enclose the S4 RNA-binding domain; the sequence is SMLSSVLYNS…VNLPSVLAAI (64 aa).

Belongs to the universal ribosomal protein uS4 family. In terms of assembly, part of the 30S ribosomal subunit. Contacts protein S5. The interaction surface between S4 and S5 is involved in control of translational fidelity.

One of the primary rRNA binding proteins, it binds directly to 16S rRNA where it nucleates assembly of the body of the 30S subunit. In terms of biological role, with S5 and S12 plays an important role in translational accuracy. The protein is Small ribosomal subunit protein uS4 of Ehrlichia ruminantium (strain Gardel).